The sequence spans 223 residues: Deoxyribose-phosphate aldolase (223 aa).

The active-site Proton donor/acceptor is aspartate 92. Lysine 154 acts as the Schiff-base intermediate with acetaldehyde in catalysis. Lysine 182 acts as the Proton donor/acceptor in catalysis.

It belongs to the DeoC/FbaB aldolase family. DeoC type 1 subfamily.

The protein localises to the cytoplasm. The enzyme catalyses 2-deoxy-D-ribose 5-phosphate = D-glyceraldehyde 3-phosphate + acetaldehyde. It functions in the pathway carbohydrate degradation; 2-deoxy-D-ribose 1-phosphate degradation; D-glyceraldehyde 3-phosphate and acetaldehyde from 2-deoxy-alpha-D-ribose 1-phosphate: step 2/2. Functionally, catalyzes a reversible aldol reaction between acetaldehyde and D-glyceraldehyde 3-phosphate to generate 2-deoxy-D-ribose 5-phosphate. The chain is Deoxyribose-phosphate aldolase from Haemophilus influenzae (strain ATCC 51907 / DSM 11121 / KW20 / Rd).